Here is a 154-residue protein sequence, read N- to C-terminus: Lipoprotein signal peptidase (154 aa).

Transmembrane regions (helical) follow at residues 4 to 24, 62 to 82, and 84 to 104; these read IIIPIITILLIALDQLSKLWI, LFTLITIFVVCVAIIYLMKHI, and GSYWLLISLTLIISGGLGNFI. Catalysis depends on residues D114 and D130. Residues 125 to 145 form a helical membrane-spanning segment; it reads IFNVADSYLTIGIICLMIALW.

The protein belongs to the peptidase A8 family.

It is found in the cell membrane. It catalyses the reaction Release of signal peptides from bacterial membrane prolipoproteins. Hydrolyzes -Xaa-Yaa-Zaa-|-(S,diacylglyceryl)Cys-, in which Xaa is hydrophobic (preferably Leu), and Yaa (Ala or Ser) and Zaa (Gly or Ala) have small, neutral side chains.. The protein operates within protein modification; lipoprotein biosynthesis (signal peptide cleavage). This protein specifically catalyzes the removal of signal peptides from prolipoproteins. This is Lipoprotein signal peptidase from Streptococcus agalactiae serotype Ia (strain ATCC 27591 / A909 / CDC SS700).